Here is a 338-residue protein sequence, read N- to C-terminus: Ketol-acid reductoisomerase (NADP(+)) (338 aa).

Positions 1–181 (MKVFYDKDAD…GGGRAGIIET (181 aa)) constitute a KARI N-terminal Rossmann domain. Residues 24–27 (YGSQ), R47, and S52 each bind NADP(+). H107 is an active-site residue. NADP(+) is bound at residue G133. The region spanning 182 to 327 (NFREETETDL…SKLRAMMPWI (146 aa)) is the KARI C-terminal knotted domain. Mg(2+) is bound by residues D190, E194, E226, and E230. S251 is a binding site for substrate.

It belongs to the ketol-acid reductoisomerase family. Mg(2+) serves as cofactor.

The enzyme catalyses (2R)-2,3-dihydroxy-3-methylbutanoate + NADP(+) = (2S)-2-acetolactate + NADPH + H(+). The catalysed reaction is (2R,3R)-2,3-dihydroxy-3-methylpentanoate + NADP(+) = (S)-2-ethyl-2-hydroxy-3-oxobutanoate + NADPH + H(+). It functions in the pathway amino-acid biosynthesis; L-isoleucine biosynthesis; L-isoleucine from 2-oxobutanoate: step 2/4. It participates in amino-acid biosynthesis; L-valine biosynthesis; L-valine from pyruvate: step 2/4. Involved in the biosynthesis of branched-chain amino acids (BCAA). Catalyzes an alkyl-migration followed by a ketol-acid reduction of (S)-2-acetolactate (S2AL) to yield (R)-2,3-dihydroxy-isovalerate. In the isomerase reaction, S2AL is rearranged via a Mg-dependent methyl migration to produce 3-hydroxy-3-methyl-2-ketobutyrate (HMKB). In the reductase reaction, this 2-ketoacid undergoes a metal-dependent reduction by NADPH to yield (R)-2,3-dihydroxy-isovalerate. In Burkholderia thailandensis (strain ATCC 700388 / DSM 13276 / CCUG 48851 / CIP 106301 / E264), this protein is Ketol-acid reductoisomerase (NADP(+)).